Here is a 786-residue protein sequence, read N- to C-terminus: AT-rich interactive domain-containing protein 3 (786 aa).

Over residues 1–16 (MENLTEIESTMESLTE) the composition is skewed to low complexity. 3 disordered regions span residues 1-182 (MENL…HHAD), 199-251 (SGDH…IPAN), and 395-420 (DTTVDSTNNKDAHVEANTERQDNSSA). 2 stretches are compositionally biased toward basic and acidic residues: residues 18–64 (ESER…HEDS) and 87–97 (DLPKIDDEKNS). A compositionally biased stretch (low complexity) spans 130–139 (ENIVSSEVSS). 5 stretches are compositionally biased toward basic and acidic residues: residues 141 to 156 (ILKDDGDAVEVDRDTA), 169 to 182 (KLSEDTGSPHHHAD), 199 to 219 (SGDHEEFPVNPDNKHSEENQS), 234 to 248 (AEEREIISPGEHKEI), and 402 to 416 (NNKDAHVEANTERQD). Residues 494-585 (EEDQSAFMKE…ALLEYERHKV (92 aa)) form the ARID domain. The tract at residues 606 to 638 (QASGSGRARRDAASRAMQGWHSQRLNGNGEVSD) is disordered. The sHSP domain occupies 686–786 (VTVVDVGPPA…FVRVPLEQLE (101 aa)).

Belongs to the small heat shock protein (HSP20) family.

The protein localises to the nucleus. The chain is AT-rich interactive domain-containing protein 3 (ARID3) from Arabidopsis thaliana (Mouse-ear cress).